We begin with the raw amino-acid sequence, 161 residues long: Lipoprotein signal peptidase (161 aa).

Transmembrane regions (helical) follow at residues 6-26 (ILFL…KFYV), 67-87 (GLFF…YLIK), and 90-110 (VSDL…MGNL). Catalysis depends on residues Asp121 and Asp139. The chain crosses the membrane as a helical span at residues 134-154 (AFNIADTAISIGVLFLVVDMI).

Belongs to the peptidase A8 family.

It localises to the cell inner membrane. The enzyme catalyses Release of signal peptides from bacterial membrane prolipoproteins. Hydrolyzes -Xaa-Yaa-Zaa-|-(S,diacylglyceryl)Cys-, in which Xaa is hydrophobic (preferably Leu), and Yaa (Ala or Ser) and Zaa (Gly or Ala) have small, neutral side chains.. It functions in the pathway protein modification; lipoprotein biosynthesis (signal peptide cleavage). Its function is as follows. This protein specifically catalyzes the removal of signal peptides from prolipoproteins. In Syntrophus aciditrophicus (strain SB), this protein is Lipoprotein signal peptidase.